The sequence spans 114 residues: Nucleoid-associated protein MAB_0319 (114 aa).

This sequence belongs to the YbaB/EbfC family. Homodimer.

Its subcellular location is the cytoplasm. It is found in the nucleoid. Binds to DNA and alters its conformation. May be involved in regulation of gene expression, nucleoid organization and DNA protection. In Mycobacteroides abscessus (strain ATCC 19977 / DSM 44196 / CCUG 20993 / CIP 104536 / JCM 13569 / NCTC 13031 / TMC 1543 / L948) (Mycobacterium abscessus), this protein is Nucleoid-associated protein MAB_0319.